The sequence spans 585 residues: Putative ABC transporter ATP-binding protein MG187 (585 aa).

The ABC transporter domain occupies 8-468; that stretch reads IELKNIVVDF…PANEFVARFL (461 aa). Residue 40–47 coordinates ATP; it reads GPSGCGKT.

The protein belongs to the ABC transporter superfamily.

The chain is Putative ABC transporter ATP-binding protein MG187 from Mycoplasma genitalium (strain ATCC 33530 / DSM 19775 / NCTC 10195 / G37) (Mycoplasmoides genitalium).